The sequence spans 182 residues: Endoribonuclease YbeY (182 aa).

Residues H115, H119, and H125 each coordinate Zn(2+).

It belongs to the endoribonuclease YbeY family. Zn(2+) serves as cofactor.

The protein resides in the cytoplasm. In terms of biological role, single strand-specific metallo-endoribonuclease involved in late-stage 70S ribosome quality control and in maturation of the 3' terminus of the 16S rRNA. This Bifidobacterium longum (strain NCC 2705) protein is Endoribonuclease YbeY.